A 345-amino-acid chain; its full sequence is Neurotrimin (345 aa).

Positions 1–30 (MGVCGSLFLPWKCLVVVSLRLLFLVPTGVP) are cleaved as a signal peptide. Ig-like C2-type domains follow at residues 39–126 (PKAM…PKTS), 136–218 (PKIV…VKVT), and 222–309 (PPYI…ASIT). N-linked (GlcNAc...) asparagine glycans are attached at residues Asn44, Asn70, and Asn152. Cys57 and Cys115 are joined by a disulfide. 2 disulfide bridges follow: Cys157-Cys201 and Cys243-Cys295. N-linked (GlcNAc...) asparagine glycans are attached at residues Asn284, Asn292, Asn305, and Asn321. A lipid anchor (GPI-anchor amidated asparagine) is attached at Asn321. Residues 322-345 (GTSSRRAGCLWLLPLLVLHLLLKF) constitute a propeptide, removed in mature form.

It belongs to the immunoglobulin superfamily. IgLON family.

The protein localises to the cell membrane. Neural cell adhesion molecule. The chain is Neurotrimin (NTM) from Bos taurus (Bovine).